A 424-amino-acid polypeptide reads, in one-letter code: GTPase Obg (424 aa).

An Obg domain is found at 1–158; the sequence is MFIDTAKILV…RMINLEIKLL (158 aa). One can recognise an OBG-type G domain in the interval 159-331; that stretch reads ADVGLIGFPN…LIKEVTRQLS (173 aa). Residues 165–172, 190–194, 212–215, 282–285, and 312–314 contribute to the GTP site; these read GFPNVGKS, FTTLK, DIPG, NKID, and SAA. Positions 172 and 192 each coordinate Mg(2+). The region spanning 345 to 424 is the OCT domain; that stretch reads RFMPEEKRFT…LNDFEFDFLL (80 aa).

The protein belongs to the TRAFAC class OBG-HflX-like GTPase superfamily. OBG GTPase family. Monomer. Mg(2+) is required as a cofactor.

The protein localises to the cytoplasm. Its function is as follows. An essential GTPase which binds GTP, GDP and possibly (p)ppGpp with moderate affinity, with high nucleotide exchange rates and a fairly low GTP hydrolysis rate. Plays a role in control of the cell cycle, stress response, ribosome biogenesis and in those bacteria that undergo differentiation, in morphogenesis control. This Clostridium novyi (strain NT) protein is GTPase Obg.